Consider the following 520-residue polypeptide: Bifunctional purine biosynthesis protein PurH (520 aa).

Residues 1-146 enclose the MGS-like domain; the sequence is MAPVALLSVS…KNHADVAVLT (146 aa).

This sequence belongs to the PurH family.

It carries out the reaction (6R)-10-formyltetrahydrofolate + 5-amino-1-(5-phospho-beta-D-ribosyl)imidazole-4-carboxamide = 5-formamido-1-(5-phospho-D-ribosyl)imidazole-4-carboxamide + (6S)-5,6,7,8-tetrahydrofolate. The catalysed reaction is IMP + H2O = 5-formamido-1-(5-phospho-D-ribosyl)imidazole-4-carboxamide. It participates in purine metabolism; IMP biosynthesis via de novo pathway; 5-formamido-1-(5-phospho-D-ribosyl)imidazole-4-carboxamide from 5-amino-1-(5-phospho-D-ribosyl)imidazole-4-carboxamide (10-formyl THF route): step 1/1. The protein operates within purine metabolism; IMP biosynthesis via de novo pathway; IMP from 5-formamido-1-(5-phospho-D-ribosyl)imidazole-4-carboxamide: step 1/1. In Synechococcus sp. (strain CC9902), this protein is Bifunctional purine biosynthesis protein PurH.